A 378-amino-acid polypeptide reads, in one-letter code: Erythronate-4-phosphate dehydrogenase (378 aa).

Substrate is bound by residues serine 45 and threonine 66. NAD(+) contacts are provided by aspartate 146 and threonine 175. Arginine 208 is a catalytic residue. Residue aspartate 232 participates in NAD(+) binding. The active site involves glutamate 237. The Proton donor role is filled by histidine 254. NAD(+) is bound at residue glycine 257. Tyrosine 258 contributes to the substrate binding site.

This sequence belongs to the D-isomer specific 2-hydroxyacid dehydrogenase family. PdxB subfamily. In terms of assembly, homodimer.

The protein localises to the cytoplasm. The enzyme catalyses 4-phospho-D-erythronate + NAD(+) = (R)-3-hydroxy-2-oxo-4-phosphooxybutanoate + NADH + H(+). It participates in cofactor biosynthesis; pyridoxine 5'-phosphate biosynthesis; pyridoxine 5'-phosphate from D-erythrose 4-phosphate: step 2/5. Functionally, catalyzes the oxidation of erythronate-4-phosphate to 3-hydroxy-2-oxo-4-phosphonooxybutanoate. The polypeptide is Erythronate-4-phosphate dehydrogenase (Shigella flexneri serotype 5b (strain 8401)).